A 111-amino-acid polypeptide reads, in one-letter code: uncharacterized protein (111 aa).

The helical transmembrane segment at 48 to 70 (LFLVPFPASFTRWLTFLFHLVIY) threads the bilayer.

It localises to the membrane. This is an uncharacterized protein from Saccharomyces cerevisiae (strain ATCC 204508 / S288c) (Baker's yeast).